We begin with the raw amino-acid sequence, 290 residues long: RIO-type serine/threonine-protein kinase Rio1 (290 aa).

The Protein kinase domain maps to 76-290; it reads TEYIGIVNSG…PIDEAMIKQL (215 aa). ATP contacts are provided by residues 82 to 90 and Lys-103; that span reads VNSGKEAVV. Asp-214 (proton acceptor) is an active-site residue. Positions 219 and 231 each coordinate Mg(2+). Asp-231 serves as the catalytic 4-aspartylphosphate intermediate.

The protein belongs to the protein kinase superfamily. RIO-type Ser/Thr kinase family.

The enzyme catalyses L-seryl-[protein] + ATP = O-phospho-L-seryl-[protein] + ADP + H(+). It catalyses the reaction L-threonyl-[protein] + ATP = O-phospho-L-threonyl-[protein] + ADP + H(+). It carries out the reaction ATP + H2O = ADP + phosphate + H(+). Despite the protein kinase domain is proposed to act predominantly as an ATPase. In Methanocaldococcus jannaschii (strain ATCC 43067 / DSM 2661 / JAL-1 / JCM 10045 / NBRC 100440) (Methanococcus jannaschii), this protein is RIO-type serine/threonine-protein kinase Rio1 (rio1).